The following is a 340-amino-acid chain: Fructoselysine 6-phosphate deglycase (340 aa).

2 SIS domains span residues 35-169 (IVEE…RLAP) and 201-331 (LGEL…PDER).

Homododecamer.

It catalyses the reaction N(6)-(6-phospho-D-fructosyl)-L-lysine + H2O = D-glucose 6-phosphate + L-lysine. It functions in the pathway carbohydrate metabolism; fructoselysine degradation; D-glucose 6-phosphate and lysine from fructoselysine: step 2/2. Catalyzes the reversible conversion of fructoselysine 6-phosphate to glucose 6-phosphate and lysine. Functions in a fructoselysine degradation pathway that allows E.coli to grow on fructoselysine or psicoselysine. This Escherichia coli O157:H7 protein is Fructoselysine 6-phosphate deglycase (frlB).